The following is a 102-amino-acid chain: MNGQNIRIRLKAFDHRVLDASTKEIVSTAKRTGANVRGPIPLPTRIEKFTVNRSPHVDKKSREQFEMRTHKRLLDIVDPTPQTVDALMKLDLAAGVDVEIKL.

The protein belongs to the universal ribosomal protein uS10 family. As to quaternary structure, part of the 30S ribosomal subunit.

Involved in the binding of tRNA to the ribosomes. In Mesorhizobium japonicum (strain LMG 29417 / CECT 9101 / MAFF 303099) (Mesorhizobium loti (strain MAFF 303099)), this protein is Small ribosomal subunit protein uS10.